A 161-amino-acid polypeptide reads, in one-letter code: Pleiotrophin-B (161 aa).

Residues 1 to 23 form the signal peptide; sequence MHHQHGLFMLALLAFLLVMTVLG. Cystine bridges form between C41–C70, C49–C79, C56–C83, C93–C125, and C103–C135. Chondroitin sulfate binding stretches follow at residues 86 to 93 and 117 to 125; these read KKQFGAEC and KRALHNAEC. The segment at 136–161 is disordered; that stretch reads GKVTKPKLQESKKKKKEGKNKEKLLD. The tract at residues 141-161 is chondroitin sulfate A binding; the sequence is PKLQESKKKKKEGKNKEKLLD.

The protein belongs to the pleiotrophin family. Expressed in high levels in brain and eye. Lower levels in bone. In the tailbud embryo stage, it is expressed exclusively in the central nervous system, especially in the hind region of the brain.

It localises to the secreted. Secreted growth factor that mediates its signal through cell-surface proteoglycan and non-proteoglycan receptors. Binds cell-surface proteoglycan receptor via their chondroitin sulfate (CS) groups. Thereby regulates many processes like cell proliferation, cell survival, cell growth, cell differentiation and cell migration. Has antibacterial activity against both Gram-positive and Gram-negative bacteria. In Xenopus laevis (African clawed frog), this protein is Pleiotrophin-B (ptn-b).